The primary structure comprises 745 residues: Phosphoribosylformylglycinamidine synthase subunit PurL (745 aa).

Residue His47 is part of the active site. 2 residues coordinate ATP: Tyr50 and Lys90. A Mg(2+)-binding site is contributed by Glu92. Residues 93–96 (SHNH) and Arg115 contribute to the substrate site. Residue His94 is the Proton acceptor of the active site. Asp116 serves as a coordination point for Mg(2+). Gln240 contacts substrate. Position 268 (Asp268) interacts with Mg(2+). 312–314 (ESQ) is a binding site for substrate. The ATP site is built by Asn501 and Gly538. Asn539 is a binding site for Mg(2+). Ser541 provides a ligand contact to substrate.

Belongs to the FGAMS family. As to quaternary structure, monomer. Part of the FGAM synthase complex composed of 1 PurL, 1 PurQ and 2 PurS subunits.

The protein resides in the cytoplasm. It catalyses the reaction N(2)-formyl-N(1)-(5-phospho-beta-D-ribosyl)glycinamide + L-glutamine + ATP + H2O = 2-formamido-N(1)-(5-O-phospho-beta-D-ribosyl)acetamidine + L-glutamate + ADP + phosphate + H(+). The protein operates within purine metabolism; IMP biosynthesis via de novo pathway; 5-amino-1-(5-phospho-D-ribosyl)imidazole from N(2)-formyl-N(1)-(5-phospho-D-ribosyl)glycinamide: step 1/2. Functionally, part of the phosphoribosylformylglycinamidine synthase complex involved in the purines biosynthetic pathway. Catalyzes the ATP-dependent conversion of formylglycinamide ribonucleotide (FGAR) and glutamine to yield formylglycinamidine ribonucleotide (FGAM) and glutamate. The FGAM synthase complex is composed of three subunits. PurQ produces an ammonia molecule by converting glutamine to glutamate. PurL transfers the ammonia molecule to FGAR to form FGAM in an ATP-dependent manner. PurS interacts with PurQ and PurL and is thought to assist in the transfer of the ammonia molecule from PurQ to PurL. This is Phosphoribosylformylglycinamidine synthase subunit PurL from Leptospira borgpetersenii serovar Hardjo-bovis (strain JB197).